The chain runs to 526 residues: Acetyl-CoA hydrolase (526 aa).

277–281 is a CoA binding site; sequence GIGNI. Glu302 acts as the 5-glutamyl coenzyme A thioester intermediate in catalysis. CoA contacts are provided by Asn392 and Gly396.

It belongs to the acetyl-CoA hydrolase/transferase family.

The protein resides in the cytoplasm. It catalyses the reaction acetyl-CoA + H2O = acetate + CoA + H(+). Presumably involved in regulating the intracellular acetyl-CoA pool for fatty acid and cholesterol synthesis and fatty acid oxidation. In Candida glabrata (strain ATCC 2001 / BCRC 20586 / JCM 3761 / NBRC 0622 / NRRL Y-65 / CBS 138) (Yeast), this protein is Acetyl-CoA hydrolase (ACH1).